A 452-amino-acid polypeptide reads, in one-letter code: Ribosomal protein uS12 methylthiotransferase RimO (452 aa).

Residues 3–118 (GKIGFVSLGC…VMQVIHLHLP (116 aa)) enclose the MTTase N-terminal domain. [4Fe-4S] cluster contacts are provided by Cys-12, Cys-48, Cys-77, Cys-149, Cys-153, and Cys-156. A Radical SAM core domain is found at 135–382 (LTPKHYAYLK…AKAEEISVGR (248 aa)). The TRAM domain occupies 384 to 452 (AKKIGKRLQV…SQGHDLIAET (69 aa)).

Belongs to the methylthiotransferase family. RimO subfamily. The cofactor is [4Fe-4S] cluster.

It is found in the cytoplasm. The enzyme catalyses L-aspartate(89)-[ribosomal protein uS12]-hydrogen + (sulfur carrier)-SH + AH2 + 2 S-adenosyl-L-methionine = 3-methylsulfanyl-L-aspartate(89)-[ribosomal protein uS12]-hydrogen + (sulfur carrier)-H + 5'-deoxyadenosine + L-methionine + A + S-adenosyl-L-homocysteine + 2 H(+). Catalyzes the methylthiolation of an aspartic acid residue of ribosomal protein uS12. This chain is Ribosomal protein uS12 methylthiotransferase RimO, found in Polynucleobacter necessarius subsp. necessarius (strain STIR1).